The primary structure comprises 115 residues: Holo-[acyl-carrier-protein] synthase (115 aa).

Mg(2+) is bound by residues aspartate 8 and glutamate 50.

Belongs to the P-Pant transferase superfamily. AcpS family. Mg(2+) serves as cofactor.

Its subcellular location is the cytoplasm. The catalysed reaction is apo-[ACP] + CoA = holo-[ACP] + adenosine 3',5'-bisphosphate + H(+). Functionally, transfers the 4'-phosphopantetheine moiety from coenzyme A to a Ser of acyl-carrier-protein. The chain is Holo-[acyl-carrier-protein] synthase from Cutibacterium acnes (strain DSM 16379 / KPA171202) (Propionibacterium acnes).